Here is a 486-residue protein sequence, read N- to C-terminus: Cysteine--tRNA ligase (486 aa).

Residue C30 participates in Zn(2+) binding. The 'HIGH' region motif lies at 32 to 42 (PTVYDRAHLGN). Zn(2+) contacts are provided by C221, H246, and E250. The 'KMSKS' region signature appears at 279 to 283 (KMSKS). K282 serves as a coordination point for ATP.

The protein belongs to the class-I aminoacyl-tRNA synthetase family. Monomer. The cofactor is Zn(2+).

Its subcellular location is the cytoplasm. The enzyme catalyses tRNA(Cys) + L-cysteine + ATP = L-cysteinyl-tRNA(Cys) + AMP + diphosphate. The chain is Cysteine--tRNA ligase from Cereibacter sphaeroides (strain ATCC 17029 / ATH 2.4.9) (Rhodobacter sphaeroides).